The following is a 228-amino-acid chain: Translation initiation factor 6 (228 aa).

In terms of biological role, binds to the 50S ribosomal subunit and prevents its association with the 30S ribosomal subunit to form the 70S initiation complex. This is Translation initiation factor 6 from Methanocaldococcus jannaschii (strain ATCC 43067 / DSM 2661 / JAL-1 / JCM 10045 / NBRC 100440) (Methanococcus jannaschii).